Here is a 232-residue protein sequence, read N- to C-terminus: Phosphoribosylformylglycinamidine synthase subunit PurQ (232 aa).

The region spanning 2–232 is the Glutamine amidotransferase type-1 domain; that stretch reads RIGVITFPGS…SVVRSTLVEA (231 aa). Cys-85 (nucleophile) is an active-site residue. Catalysis depends on residues His-194 and Glu-196.

Part of the FGAM synthase complex composed of 1 PurL, 1 PurQ and 2 PurS subunits.

Its subcellular location is the cytoplasm. The catalysed reaction is N(2)-formyl-N(1)-(5-phospho-beta-D-ribosyl)glycinamide + L-glutamine + ATP + H2O = 2-formamido-N(1)-(5-O-phospho-beta-D-ribosyl)acetamidine + L-glutamate + ADP + phosphate + H(+). It catalyses the reaction L-glutamine + H2O = L-glutamate + NH4(+). It participates in purine metabolism; IMP biosynthesis via de novo pathway; 5-amino-1-(5-phospho-D-ribosyl)imidazole from N(2)-formyl-N(1)-(5-phospho-D-ribosyl)glycinamide: step 1/2. Part of the phosphoribosylformylglycinamidine synthase complex involved in the purines biosynthetic pathway. Catalyzes the ATP-dependent conversion of formylglycinamide ribonucleotide (FGAR) and glutamine to yield formylglycinamidine ribonucleotide (FGAM) and glutamate. The FGAM synthase complex is composed of three subunits. PurQ produces an ammonia molecule by converting glutamine to glutamate. PurL transfers the ammonia molecule to FGAR to form FGAM in an ATP-dependent manner. PurS interacts with PurQ and PurL and is thought to assist in the transfer of the ammonia molecule from PurQ to PurL. This is Phosphoribosylformylglycinamidine synthase subunit PurQ from Leifsonia xyli subsp. xyli (strain CTCB07).